We begin with the raw amino-acid sequence, 812 residues long: Fibrous sheath CABYR-binding protein (812 aa).

A disordered region spans residues 1–66 (MEESDEPEQP…SIGNIPGGKA (66 aa)). Residues S25, S57, S125, S133, S184, and S273 each carry the phosphoserine modification. 4 disordered regions span residues 269–333 (IQAP…PKGT), 367–388 (DSGR…PPLS), 424–547 (FEDQ…PPSL), and 672–741 (PAEE…PSVK). Positions 275–286 (AKETSAAETTAK) are enriched in low complexity. Pro residues predominate over residues 488–501 (EVPPLPTEEWPLPP). Over residues 502–513 (VTEESPAEVTPP) the composition is skewed to low complexity. Over residues 514–528 (ETEEGPIEPAEEGPE) the composition is skewed to acidic residues.

As to quaternary structure, interacts with CABYR.

It is found in the cell projection. Its subcellular location is the cilium. The protein localises to the flagellum. Functionally, may be involved in the later stages of fibrous sheath biogenesis. Binds calcium. In Rattus norvegicus (Rat), this protein is Fibrous sheath CABYR-binding protein.